Reading from the N-terminus, the 362-residue chain is MAFKRKTRWLWQVLILSVGLNMLFLLLFYSAIFRKDIYKLHLFSGPLIAKSSRKVYLSEDFLNEISQASLDDLISLFKDERYMYGRPIKLWALSVAIASHHIDITPVLSKPLTYTELKGSSVRWLLPNIDLKDFPVILDYLRCHKYPYTSKGLFLLIEKMVQEGWVDEDCLYHFCSTPEFLYLRTLLVGADVQASSVASLARMVIRCGSERFFHFCNEESRTSMISATQRQKVLKSYLDCEESLAALLLLVHDSDVVLHEFCDEDLEKVIRLMPQESPYSQNFFSRLQHSPRRELACMSTQRVEAPRVQEDQDEEYVVQDGDSLWLIAKRFGIPMDKIIQKNGLNHHRLFPGKVLKLPAKQS.

Residues 13–33 (VLILSVGLNMLFLLLFYSAIF) traverse the membrane as a helical segment. The region spanning 314–357 (EEYVVQDGDSLWLIAKRFGIPMDKIIQKNGLNHHRLFPGKVLKL) is the LysM domain.

This sequence belongs to the chlamydial CPn_0593/CT_474/TC_0759 family.

The protein resides in the membrane. This is an uncharacterized protein from Chlamydia pneumoniae (Chlamydophila pneumoniae).